The chain runs to 269 residues: Shikimate dehydrogenase (NADP(+)) (269 aa).

Residues 13–15 (SLS) and Thr60 each bind shikimate. Lys64 serves as the catalytic Proton acceptor. Position 76 (Glu76) interacts with NADP(+). Asn85 and Asp100 together coordinate shikimate. NADP(+) contacts are provided by residues 124 to 128 (GAGGA), 148 to 153 (NRTMSR), and Ile209. Tyr211 serves as a coordination point for shikimate. Gly232 is a binding site for NADP(+). Gln239 contacts shikimate.

The protein belongs to the shikimate dehydrogenase family. In terms of assembly, monomer or homodimer.

The catalysed reaction is shikimate + NADP(+) = 3-dehydroshikimate + NADPH + H(+). The protein operates within metabolic intermediate biosynthesis; chorismate biosynthesis; chorismate from D-erythrose 4-phosphate and phosphoenolpyruvate: step 4/7. In terms of biological role, involved in the biosynthesis of the chorismate, which leads to the biosynthesis of aromatic amino acids. Catalyzes the reversible NADPH linked reduction of 3-dehydroshikimate (DHSA) to yield shikimate (SA). It can also use NAD to oxidize shikimate. The chain is Shikimate dehydrogenase (NADP(+)) from Staphylococcus epidermidis (strain ATCC 35984 / DSM 28319 / BCRC 17069 / CCUG 31568 / BM 3577 / RP62A).